The primary structure comprises 1576 residues: Spermatogenesis-associated protein 31D1 (1576 aa).

The chain crosses the membrane as a helical span at residues 29–49; it reads FICLSGLGLFILYLFYVVLTL. Disordered regions lie at residues 170–197, 542–572, 782–801, 952–1033, and 1293–1347; these read FTLASTPSATPPEDLILSPRPKASPPPP, HESPVLPPPQPLSLPSTQPLPLPQTLPQGQS, KDHLLHGPETSSDKDLRSNS, SQGD…TDFQ, and RVSP…PPPE. The span at 546–565 shows a compositional bias: pro residues; sequence VLPPPQPLSLPSTQPLPLPQ. The span at 966–980 shows a compositional bias: polar residues; sequence RSTFQGEKLGTTSSV. Residues 1004–1019 are compositionally biased toward basic and acidic residues; the sequence is QFSDTDHDLIETDSKD. Polar residues predominate over residues 1020–1032; it reads GASTSLRRGTTDF.

It belongs to the SPATA31 family.

It is found in the membrane. Its function is as follows. May play a role in spermatogenesis. This Homo sapiens (Human) protein is Spermatogenesis-associated protein 31D1 (SPATA31D1).